Here is a 331-residue protein sequence, read N- to C-terminus: Lipoyl synthase (331 aa).

[4Fe-4S] cluster-binding residues include cysteine 74, cysteine 79, cysteine 85, cysteine 100, cysteine 104, cysteine 107, and serine 314. The region spanning 85-303 is the Radical SAM core domain; the sequence is CFGKGTATFM…ETEAYKMGFT (219 aa).

This sequence belongs to the radical SAM superfamily. Lipoyl synthase family. [4Fe-4S] cluster serves as cofactor.

Its subcellular location is the cytoplasm. The catalysed reaction is [[Fe-S] cluster scaffold protein carrying a second [4Fe-4S](2+) cluster] + N(6)-octanoyl-L-lysyl-[protein] + 2 oxidized [2Fe-2S]-[ferredoxin] + 2 S-adenosyl-L-methionine + 4 H(+) = [[Fe-S] cluster scaffold protein] + N(6)-[(R)-dihydrolipoyl]-L-lysyl-[protein] + 4 Fe(3+) + 2 hydrogen sulfide + 2 5'-deoxyadenosine + 2 L-methionine + 2 reduced [2Fe-2S]-[ferredoxin]. Its pathway is protein modification; protein lipoylation via endogenous pathway; protein N(6)-(lipoyl)lysine from octanoyl-[acyl-carrier-protein]: step 2/2. Catalyzes the radical-mediated insertion of two sulfur atoms into the C-6 and C-8 positions of the octanoyl moiety bound to the lipoyl domains of lipoate-dependent enzymes, thereby converting the octanoylated domains into lipoylated derivatives. This chain is Lipoyl synthase, found in Leptothrix cholodnii (strain ATCC 51168 / LMG 8142 / SP-6) (Leptothrix discophora (strain SP-6)).